The chain runs to 396 residues: Calcium-responsive transactivator (396 aa).

The tract at residues 1 to 148 is N-terminal auto-inhibitory domain; necessary for interaction with SMARCA4/BRG1; it reads MSVAFASARP…TLPTTSMSIS (148 aa). The SH2-binding signature appears at 50 to 53; the sequence is YQQI. Disordered stretches follow at residues 72-162, 192-280, and 311-396; these read QSLL…SQGV, QAAT…GDYA, and SQQQ…NYQQ. A compositionally biased stretch (low complexity) spans 90-106; that stretch reads LTQSGSSQGLHSQGSLS. 2 stretches are compositionally biased toward polar residues: residues 107-122 and 128-147; these read DAIS…LQGQ and SHVS…SMSI. Positions 149 to 232 are methionine-rich intra-molecular domain; the sequence is GPGYSHAGPA…GSSMMGQRPM (84 aa). Composition is skewed to low complexity over residues 199–229, 238–261, and 311–369; these read SSAQ…MMGQ, SQQG…SHSQ, and SQQQ…YGSY. The tract at residues 246-317 is MFD domain; it reads YLGQEEYYGE…SQYSQQQAGY (72 aa). The necessary for nuclear localization stretch occupies residues 334–396; the sequence is SQQSYPGQQQ…EQGQYGNYQQ (63 aa). Positions 353 to 356 match the SH2-binding motif; it reads SQYP. An SH3-binding motif is present at residues 371–379; sequence APQTAPSAQ. A compositionally biased stretch (low complexity) spans 384–396; that stretch reads YGYEQGQYGNYQQ. Residues 387–396 are necessary for interaction with CREBBP and for the recruitment of CREBBP to the nuclear bodies; the sequence is EQGQYGNYQQ. An SH2-binding motif is present at residues 391–394; sequence YGNY.

It belongs to the SS18 family. In terms of assembly, homodimer. Dimerization may be necessary for its function in neuronal dendritic development. Interacts (via C-terminus) with CREBBP (via N-terminus), EP300 and SMARCA4/BRG1. Interacts with the nBAF complex. Association with CREBBP facilitates transcription while the association with SMARCA4/BRG1 suppresses CREST-mediated transcription in resting neurons. As to expression, ubiquitous; with lowest levels in spleen.

Its subcellular location is the nucleus. It is found in the chromosome. It localises to the centromere. The protein localises to the kinetochore. Functionally, transcriptional activator which is required for calcium-dependent dendritic growth and branching in cortical neurons. Recruits CREB-binding protein (CREBBP) to nuclear bodies. Component of the CREST-BRG1 complex, a multiprotein complex that regulates promoter activation by orchestrating a calcium-dependent release of a repressor complex and a recruitment of an activator complex. In resting neurons, transcription of the c-FOS promoter is inhibited by BRG1-dependent recruitment of a phospho-RB1-HDAC1 repressor complex. Upon calcium influx, RB1 is dephosphorylated by calcineurin, which leads to release of the repressor complex. At the same time, there is increased recruitment of CREBBP to the promoter by a CREST-dependent mechanism, which leads to transcriptional activation. The CREST-BRG1 complex also binds to the NR2B promoter, and activity-dependent induction of NR2B expression involves a release of HDAC1 and recruitment of CREBBP. The polypeptide is Calcium-responsive transactivator (SS18L1) (Homo sapiens (Human)).